The primary structure comprises 249 residues: tRNA pseudouridine synthase A (249 aa).

Asp-53 acts as the Nucleophile in catalysis. Tyr-111 is a substrate binding site.

This sequence belongs to the tRNA pseudouridine synthase TruA family. In terms of assembly, homodimer.

It catalyses the reaction uridine(38/39/40) in tRNA = pseudouridine(38/39/40) in tRNA. In terms of biological role, formation of pseudouridine at positions 38, 39 and 40 in the anticodon stem and loop of transfer RNAs. The sequence is that of tRNA pseudouridine synthase A from Streptococcus pneumoniae (strain 70585).